Reading from the N-terminus, the 337-residue chain is Dihydroorotate dehydrogenase (quinone) (337 aa).

FMN contacts are provided by residues 58-62 (AGLDK) and threonine 82. A substrate-binding site is contributed by lysine 62. Residue 107–111 (NCMGF) coordinates substrate. FMN is bound by residues asparagine 137 and asparagine 170. Asparagine 170 serves as a coordination point for substrate. Serine 173 functions as the Nucleophile in the catalytic mechanism. Position 175 (asparagine 175) interacts with substrate. FMN contacts are provided by lysine 215 and threonine 243. A substrate-binding site is contributed by 244–245 (NT). Residues glycine 266, glycine 294, and 315-316 (YS) contribute to the FMN site.

The protein belongs to the dihydroorotate dehydrogenase family. Type 2 subfamily. As to quaternary structure, monomer. Requires FMN as cofactor.

It localises to the cell membrane. It carries out the reaction (S)-dihydroorotate + a quinone = orotate + a quinol. Its pathway is pyrimidine metabolism; UMP biosynthesis via de novo pathway; orotate from (S)-dihydroorotate (quinone route): step 1/1. In terms of biological role, catalyzes the conversion of dihydroorotate to orotate with quinone as electron acceptor. This chain is Dihydroorotate dehydrogenase (quinone), found in Dichelobacter nodosus (strain VCS1703A).